Reading from the N-terminus, the 146-residue chain is Hemoglobin subunit beta (146 aa).

Val-1 carries the N-acetylvaline modification. The Globin domain maps to 2–146 (HLTADEKTAV…VANALAHKYH (145 aa)). Position 12 is a phosphothreonine (Thr-12). A Phosphoserine modification is found at Ser-44. An N6-acetyllysine modification is found at Lys-59. His-63 provides a ligand contact to heme b. An N6-acetyllysine modification is found at Lys-82. Residue His-92 participates in heme b binding. Cys-93 carries the post-translational modification S-nitrosocysteine. At Lys-144 the chain carries N6-acetyllysine.

The protein belongs to the globin family. Heterotetramer of two alpha chains and two beta chains. Red blood cells.

Its function is as follows. Involved in oxygen transport from the lung to the various peripheral tissues. This is Hemoglobin subunit beta (HBB) from Procyon lotor (Raccoon).